A 498-amino-acid polypeptide reads, in one-letter code: ATP synthase subunit beta, chloroplastic (498 aa).

A Phosphothreonine modification is found at threonine 6. A Phosphoserine modification is found at serine 13. 172–179 (GGAGVGKT) serves as a coordination point for ATP.

It belongs to the ATPase alpha/beta chains family. In terms of assembly, F-type ATPases have 2 components, CF(1) - the catalytic core - and CF(0) - the membrane proton channel. CF(1) has five subunits: alpha(3), beta(3), gamma(1), delta(1), epsilon(1). CF(0) has four main subunits: a(1), b(1), b'(1) and c(9-12).

Its subcellular location is the plastid. It is found in the chloroplast thylakoid membrane. It catalyses the reaction ATP + H2O + 4 H(+)(in) = ADP + phosphate + 5 H(+)(out). Its function is as follows. Produces ATP from ADP in the presence of a proton gradient across the membrane. The catalytic sites are hosted primarily by the beta subunits. The polypeptide is ATP synthase subunit beta, chloroplastic (Olimarabidopsis pumila (Dwarf rocket)).